The following is a 271-amino-acid chain: 3-methyl-2-oxobutanoate hydroxymethyltransferase (271 aa).

The Mg(2+) site is built by D44 and D83. 3-methyl-2-oxobutanoate-binding positions include 44-45 (DS), D83, and K112. A Mg(2+)-binding site is contributed by E114. The Proton acceptor role is filled by E181.

Belongs to the PanB family. In terms of assembly, homodecamer; pentamer of dimers. Requires Mg(2+) as cofactor.

The protein resides in the cytoplasm. The catalysed reaction is 3-methyl-2-oxobutanoate + (6R)-5,10-methylene-5,6,7,8-tetrahydrofolate + H2O = 2-dehydropantoate + (6S)-5,6,7,8-tetrahydrofolate. The protein operates within cofactor biosynthesis; coenzyme A biosynthesis. Functionally, catalyzes the reversible reaction in which hydroxymethyl group from 5,10-methylenetetrahydrofolate is transferred onto alpha-ketoisovalerate to form ketopantoate. The chain is 3-methyl-2-oxobutanoate hydroxymethyltransferase from Staphylothermus marinus (strain ATCC 43588 / DSM 3639 / JCM 9404 / F1).